We begin with the raw amino-acid sequence, 212 residues long: Protein Thf1 (212 aa).

The stretch at 179 to 201 (ERMEQAVELMQETLAADRRKKEK) forms a coiled coil.

It belongs to the THF1 family.

May be involved in photosynthetic membrane biogenesis. The protein is Protein Thf1 of Parasynechococcus marenigrum (strain WH8102).